The primary structure comprises 516 residues: MPSIHASTSELFTHLTVSNICVAAGCAFALSLLYLYVRALYLVFFHPLSRIPGPKYAACSRLPYVRNQLRGDLVKWLHSLHQQYGDVVRIAPDEVSFISNVWQDVYAAHNGEKATKGTYLKDRRWFAAPYNNTWSILQADAEAHPRMRKMIAPAFSDKVLREQEAMIQEYVELFVLRLHEQTENDSKGDVDMVKWFNFFTFDIIADMTFGESFNCLRDSDYHPWVRMLFKSVRAISLNSAIRRYPFFQAIVKRLAPKNLLEQRRQFNQFVFDRVGERLASESSHPDLMSHIKKFKDEPKGMNRDEIDSNANILLVAGSETTATLLSGCTYMLLSNPEKLAKLTKEVRGTFNHPSEVTIKAVSNMPYLHAALSEALRIYPPSPAGFMRIVPGNGDMIGGHWIPGGTSVSVSQWPANHSDSNFTMPNSFVPERFLGDPRFEKDNTSVLNPFSAGPRNCLGKSLANVEMRLIMARLLLDFDLELIDPEQDWLDQKSFTLWEKLPLMVRLKPVRRYTAPA.

A helical transmembrane segment spans residues 20–42 (ICVAAGCAFALSLLYLYVRALYL). Residues N131, N184, N415, N420, and N442 are each glycosylated (N-linked (GlcNAc...) asparagine). C456 contacts heme.

The protein belongs to the cytochrome P450 family. Heme is required as a cofactor.

It is found in the membrane. It functions in the pathway secondary metabolite biosynthesis. In terms of biological role, cytochrome P450 monooxygenase; part of the gene cluster that mediates the biosynthesis of the lipopeptide antibiotics leucinostatins that show extensive biological activities, including antimalarial, antiviral, antibacterial, antifungal, and antitumor activities, as well as phytotoxic. Leucinostatin A contains nine amino acid residues, including the unusual amino acid 4-methyl-L-proline (MePro), 2-amino-6-hydroxy-4-methyl-8-oxodecanoic acid (AHyMeOA), 3-hydroxyleucine (HyLeu), alpha-aminoisobutyric acid (AIB), beta-Ala, a 4-methylhex-2-enoic acid at the N-terminus as well as a N1,N1-dimethylpropane-1,2-diamine (DPD) at the C-terminus. The biosynthesis of leucinostatins is probably initiated with the assembly of 4-methylhex-2-enoic acid by a reducing PKS. Two reducing polyketide synthases, lcsB and lcsC, have been identified in the cluster and it is not clear which is the one that assembles 4-methylhex-2-enoic acid since both contain KS, AT, DH, cMT, ER, KR and ACP domains. The polyketide residue might be transferred to the NRPS lcsA, mediated by two additional enzymes, the acyl-CoA ligase lcsD and the thioesterase lcsE. The linear polyketide carboxylic acid, which is released from PKS, is converted to a CoA thioester by lcsD, and then lcsE hydrolyzes the thiol bond and shuttles the polyketide intermediate to lcsA. The C domain of the first module catalyzed the condensation of 4-methylhex-2-enoic acid and MePro carried by domain A1, followed by successive condensations of nine amino acids to trigger the elongation of the linear peptide. A5 and A6 domains of lcsA are proposed to incorporate leucine, A2 AHyMeOA, and A3 incorporates HyLeu. A4, A7 and A8 incorporate AIB. The AHyMeOA in leucinostatin A activated by the A2 might be produced by the second PKS (lcsB or lcsC) present within the cluster. The MePro is probably produced via leucine cyclization and may originate from a separate pathway, independent of the cluster. Another nonproteinogenic amino acid, beta-Ala, could be produced by an aspartic acid decarboxylase also localized outside of the cluster. Two candidates are VFPBJ_01400 and VFPBJ_10476. The final peptide scaffold may be released by the NAD(P)H-dependent thioester reductase (TE) at the C-terminal region of lcsA. Transamination of the lcsA product by the transaminase lcsP may produce DPD at the C-terminus. Further hydroxylation steps performed alternatively by the cytochrome P450 monooxygenases lcsI, lcsK and lcsN then yield the non-methylated leucinostatins precursor. It is also possible that leucines can be hydroxylated prior to their incorporation into the peptide. Varying extents of methylation then lead to the formation of leucinostatins A and B. The protein is Cytochrome P450 monooxygenase lcsI of Purpureocillium lilacinum (Paecilomyces lilacinus).